A 381-amino-acid polypeptide reads, in one-letter code: Sterol 24-C-methyltransferase ERG6A (381 aa).

It belongs to the class I-like SAM-binding methyltransferase superfamily. Erg6/SMT family.

The enzyme catalyses lanosterol + S-adenosyl-L-methionine = eburicol + S-adenosyl-L-homocysteine + H(+). Its pathway is steroid metabolism; ergosterol biosynthesis. Its function is as follows. Sterol 24-C-methyltransferase; part of the third module of ergosterol biosynthesis pathway that includes the late steps of the pathway. ERG6A and ERG6B methylate lanosterol at C-24 to produce eburicol. The third module or late pathway involves the ergosterol synthesis itself through consecutive reactions that mainly occur in the endoplasmic reticulum (ER) membrane. Firstly, the squalene synthase ERG9 catalyzes the condensation of 2 farnesyl pyrophosphate moieties to form squalene, which is the precursor of all steroids. Squalene synthase is crucial for balancing the incorporation of farnesyl diphosphate (FPP) into sterol and nonsterol isoprene synthesis. Secondly, squalene is converted into lanosterol by the consecutive action of the squalene epoxidase ERG1 and the lanosterol synthase ERG7. Then, the delta(24)-sterol C-methyltransferase ERG6 methylates lanosterol at C-24 to produce eburicol. Eburicol is the substrate of the sterol 14-alpha demethylase encoded by CYP51A, CYP51B and CYP51C, to yield 4,4,24-trimethyl ergosta-8,14,24(28)-trienol. CYP51B encodes the enzyme primarily responsible for sterol 14-alpha-demethylation, and plays an essential role in ascospore formation. CYP51A encodes an additional sterol 14-alpha-demethylase, induced on ergosterol depletion and responsible for the intrinsic variation in azole sensitivity. The third CYP51 isoform, CYP51C, does not encode a sterol 14-alpha-demethylase, but is required for full virulence on host wheat ears. The C-14 reductase ERG24 then reduces the C14=C15 double bond which leads to 4,4-dimethylfecosterol. A sequence of further demethylations at C-4, involving the C-4 demethylation complex containing the C-4 methylsterol oxidases ERG25, the sterol-4-alpha-carboxylate 3-dehydrogenase ERG26 and the 3-keto-steroid reductase ERG27, leads to the production of fecosterol via 4-methylfecosterol. ERG28 has a role as a scaffold to help anchor ERG25, ERG26 and ERG27 to the endoplasmic reticulum. The C-8 sterol isomerase ERG2 then catalyzes the reaction which results in unsaturation at C-7 in the B ring of sterols and thus converts fecosterol to episterol. The sterol-C5-desaturases ERG3A and ERG3BB then catalyze the introduction of a C-5 double bond in the B ring to produce 5-dehydroepisterol. The C-22 sterol desaturases ERG5A and ERG5B further convert 5-dehydroepisterol into ergosta-5,7,22,24(28)-tetraen-3beta-ol by forming the C-22(23) double bond in the sterol side chain. Finally, ergosta-5,7,22,24(28)-tetraen-3beta-ol is substrate of the C-24(28) sterol reductase ERG4 to produce ergosterol. The protein is Sterol 24-C-methyltransferase ERG6A (FG02783.1) of Gibberella zeae (strain ATCC MYA-4620 / CBS 123657 / FGSC 9075 / NRRL 31084 / PH-1) (Wheat head blight fungus).